Here is a 665-residue protein sequence, read N- to C-terminus: GRB2-associated-binding protein 2 (665 aa).

Ser2 carries the phosphoserine modification. A PH domain is found at 8-119 (DVVCTGWLRK…WVQSICQICG (112 aa)). Residues 131 to 184 (RNLSSASHGPRSSPAEFSSSQHLLRERKSSAPSHSSQPTLFTFEPPVSSHMQPT) are disordered. Residues Ser135, Ser142, Ser143, Ser149, Ser150, Ser160, Ser165, Ser211, Ser220, and Ser261 each carry the phosphoserine modification. The span at 160–170 (SAPSHSSQPTL) shows a compositional bias: polar residues. Thr262 is subject to Phosphothreonine. Tyr263 carries the phosphotyrosine modification. Residue Thr275 is modified to Phosphothreonine. 2 positions are modified to phosphoserine: Ser278 and Ser282. Thr284 is subject to Phosphothreonine. Residue Tyr290 is modified to Phosphotyrosine. Thr328 carries the post-translational modification Phosphothreonine. The tract at residues 338-396 (VATPGDSAIAPPPRPPKPSQAETSQWGSIQQRPPISENSRSVAATIPRRNTLPAMDNSR) is disordered. The short motif at 348–355 (PPPRPPKP) is the SH3-binding element. Residues 357-379 (QAETSQWGSIQQRPPISENSRSV) show a composition bias toward polar residues. A Phosphoserine modification is found at Ser365. Phosphothreonine is present on residues Thr382 and Thr388. Phosphoserine is present on Ser402. Phosphothreonine is present on Thr405. The interval 408 to 445 (YPARGSGESASWSAEPPGKTAVGRSNSASSDDNYVPMN) is disordered. Residue Ser420 is modified to Phosphoserine. The span at 430–439 (GRSNSASSDD) shows a compositional bias: polar residues. Tyr441 carries the phosphotyrosine modification. Ser469 carries the phosphoserine modification. Positions 491 to 517 (PSRGSEIQPPPVNRNLKPDRKAKPTPL) are disordered. The short motif at 499-508 (PPPVNRNLKP) is the SH3-binding element. Ser532 is modified (phosphoserine). 2 stretches are compositionally biased toward polar residues: residues 548-566 (SSSQ…STDS) and 578-600 (NPVS…STGS). Disordered regions lie at residues 548–632 (SSSQ…KVDY) and 646–665 (TMQE…GAKL). Ser612 is subject to Phosphoserine. Tyr632 bears the Phosphotyrosine mark. The segment covering 646–659 (TMQEWTDVRQSSEP) has biased composition (polar residues).

This sequence belongs to the GAB family. Part of a complex composed of EEIG1, TNFRSF11A/RANK, PLCG2, GAB2, TEC and BTK; complex formation increases in the presence of TNFSF11/RANKL. Interacts with HCK. Interacts with SHC1; may mediate interaction with receptors. Interacts with SYK. Interacts with PI-3 kinase. Interacts with GRB2 (via SH3 2 domain). Interacts (phosphorylated) with PTPN11. Interacts with TNFRSF11A (via cytoplasmic domain). Interacts (phosphorylated) with 14-3-3 family proteins SFN, YWHAB, YWHAE, YWHAG, YWHAH, YWHAQ and YWHAZ; prevents interaction with GRB2 and attenuates GAB2 signaling. Post-translationally, phosphorylated upon EGF stimulation. Phosphorylated on tyrosine residues by HCK upon IL6 signaling. Phosphorylated on tyrosine residue(s) by the thrombopoietin receptor (TPOR), stem cell factor receptor (SCFR), and T-cell and B-cell antigen receptors, gp130, IL-2R and IL-3R. Phosphorylated upon stimulation of TNFRSF11A/RANK by TNFSF11/RANKL. Dephosphorylated by PTPN11. As to expression, ubiquitously expressed.

The protein localises to the cytoplasm. It localises to the cell membrane. Its subcellular location is the membrane raft. Its function is as follows. Adapter protein which acts downstream of several membrane receptors including cytokine, antigen, hormone, cell matrix and growth factor receptors to regulate multiple signaling pathways. Regulates osteoclast differentiation mediating the TNFRSF11A/RANK signaling. In allergic response, it plays a role in mast cells activation and degranulation through PI-3-kinase regulation. Also involved in the regulation of cell proliferation and hematopoiesis. The protein is GRB2-associated-binding protein 2 (Gab2) of Mus musculus (Mouse).